A 312-amino-acid polypeptide reads, in one-letter code: MPIRIPEQLPAQNVLLGENIFTMDMDRAANQDIRPLEVGILNLMPNKIETEVQLLRLLSNTPLQINVDLIRIDNQAPKNTPQSHMDAFYHDFSSVVNKKYDGLIVTGAPLALIDYEEVKYWETMTTILEWAQRHVNSTLYLCWAAHAAMYHFYGITRELRDEKFSGVFKHKVNDPNNELLRGFDPSFYAPHSRYGHIDTSLYNSVDGLNVVAESDEVGAYIVASEDKRMVFVTGHPEYDPDTLKDEYLRDIAAGQTPPIPKNYFEGDDPATSPIVQWRSHGSLLFTNWLNYYVYQTTPYDLSQLAEKSQPKR.

Cys-142 (acyl-thioester intermediate) is an active-site residue. Substrate contacts are provided by Lys-163 and Ser-192. Residue His-235 is the Proton acceptor of the active site. Glu-237 is an active-site residue. Position 249 (Arg-249) interacts with substrate.

This sequence belongs to the MetA family.

It is found in the cytoplasm. It carries out the reaction L-homoserine + succinyl-CoA = O-succinyl-L-homoserine + CoA. It participates in amino-acid biosynthesis; L-methionine biosynthesis via de novo pathway; O-succinyl-L-homoserine from L-homoserine: step 1/1. Functionally, transfers a succinyl group from succinyl-CoA to L-homoserine, forming succinyl-L-homoserine. The polypeptide is Homoserine O-succinyltransferase (Alteromonas mediterranea (strain DSM 17117 / CIP 110805 / LMG 28347 / Deep ecotype)).